The sequence spans 133 residues: MSMSDTLADMLTRIRNAQRSRLMYVNVPSSRRREAILDVLVKEGFIHSFLIHEVRNGIKEINIKLKYSPKGESNIKEINRVSTPGKRVYLSIKKLRPYYNNMGIYIISTSKGIMSDREARKLGVGGEVICKVF.

The protein belongs to the universal ribosomal protein uS8 family. In terms of assembly, part of the 30S ribosomal subunit. Contacts proteins S5 and S12.

In terms of biological role, one of the primary rRNA binding proteins, it binds directly to 16S rRNA central domain where it helps coordinate assembly of the platform of the 30S subunit. The protein is Small ribosomal subunit protein uS8 of Orientia tsutsugamushi (strain Boryong) (Rickettsia tsutsugamushi).